The primary structure comprises 360 residues: Histidinol-phosphate aminotransferase (360 aa).

Position 222 is an N6-(pyridoxal phosphate)lysine (Lys-222).

This sequence belongs to the class-II pyridoxal-phosphate-dependent aminotransferase family. Histidinol-phosphate aminotransferase subfamily. Pyridoxal 5'-phosphate serves as cofactor.

It catalyses the reaction L-histidinol phosphate + 2-oxoglutarate = 3-(imidazol-4-yl)-2-oxopropyl phosphate + L-glutamate. It functions in the pathway amino-acid biosynthesis; L-histidine biosynthesis; L-histidine from 5-phospho-alpha-D-ribose 1-diphosphate: step 7/9. This chain is Histidinol-phosphate aminotransferase, found in Haloarcula marismortui (strain ATCC 43049 / DSM 3752 / JCM 8966 / VKM B-1809) (Halobacterium marismortui).